A 201-amino-acid polypeptide reads, in one-letter code: Holliday junction branch migration complex subunit RuvA (201 aa).

Positions 1 to 64 are domain I; that stretch reads MIGRLRGTLA…EDAHLLYGFA (64 aa). A domain II region spans residues 65 to 143; that stretch reads EKRERELFRE…AWENMPTIAP (79 aa). Residues 144–152 are flexible linker; the sequence is LVMEPRASA. Residues 153–201 form a domain III region; the sequence is TVSSAEADAVSALIALGFKPQEASRAVAAVPGEDLSSEEMIRQALKGMV.

The protein belongs to the RuvA family. Homotetramer. Forms an RuvA(8)-RuvB(12)-Holliday junction (HJ) complex. HJ DNA is sandwiched between 2 RuvA tetramers; dsDNA enters through RuvA and exits via RuvB. An RuvB hexamer assembles on each DNA strand where it exits the tetramer. Each RuvB hexamer is contacted by two RuvA subunits (via domain III) on 2 adjacent RuvB subunits; this complex drives branch migration. In the full resolvosome a probable DNA-RuvA(4)-RuvB(12)-RuvC(2) complex forms which resolves the HJ.

The protein resides in the cytoplasm. Its function is as follows. The RuvA-RuvB-RuvC complex processes Holliday junction (HJ) DNA during genetic recombination and DNA repair, while the RuvA-RuvB complex plays an important role in the rescue of blocked DNA replication forks via replication fork reversal (RFR). RuvA specifically binds to HJ cruciform DNA, conferring on it an open structure. The RuvB hexamer acts as an ATP-dependent pump, pulling dsDNA into and through the RuvAB complex. HJ branch migration allows RuvC to scan DNA until it finds its consensus sequence, where it cleaves and resolves the cruciform DNA. The protein is Holliday junction branch migration complex subunit RuvA of Pseudomonas aeruginosa (strain LESB58).